Consider the following 517-residue polypeptide: GMP synthase [glutamine-hydrolyzing] (517 aa).

Residues 11–202 (KIIVLDFGSQ…AFKVCGAKAN (192 aa)) form the Glutamine amidotransferase type-1 domain. Residue C88 is the Nucleophile of the active site. Catalysis depends on residues H176 and E178. One can recognise a GMPS ATP-PPase domain in the interval 203 to 392 (WTMDDFIEMQ…LGIPHDLVWR (190 aa)). An ATP-binding site is contributed by 230–236 (SGGVDSS).

In terms of assembly, homodimer.

It catalyses the reaction XMP + L-glutamine + ATP + H2O = GMP + L-glutamate + AMP + diphosphate + 2 H(+). It functions in the pathway purine metabolism; GMP biosynthesis; GMP from XMP (L-Gln route): step 1/1. Functionally, catalyzes the synthesis of GMP from XMP. The chain is GMP synthase [glutamine-hydrolyzing] from Lactobacillus johnsonii (strain CNCM I-12250 / La1 / NCC 533).